The chain runs to 115 residues: Dolichyl-diphosphooligosaccharide--protein glycosyltransferase subunit DAD1 (115 aa).

The Cytoplasmic portion of the chain corresponds to 1 to 31 (MVKSTSKDAQDLFRSLRSAYSATPTNLKIID). Residues 32–52 (LYVVFAVFTALIQVVYMALVG) form a helical membrane-spanning segment. The Lumenal portion of the chain corresponds to 53–55 (SFP). The helical transmembrane segment at 56–76 (FNSFLSGVLSCIGTAVLAVCL) threads the bilayer. Residues 77 to 94 (RIQVNKENKEFKDLAPER) are Cytoplasmic-facing. Residues 95–115 (AFADFVLCNLVLHLVIINFLG) traverse the membrane as a helical segment.

This sequence belongs to the DAD/OST2 family. Component of the oligosaccharyltransferase (OST) complex. Ubiquitous.

It is found in the endoplasmic reticulum membrane. It participates in protein modification; protein glycosylation. Functionally, subunit of the oligosaccharyl transferase (OST) complex that catalyzes the initial transfer of a defined glycan (Glc(3)Man(9)GlcNAc(2) in eukaryotes) from the lipid carrier dolichol-pyrophosphate to an asparagine residue within an Asn-X-Ser/Thr consensus motif in nascent polypeptide chains, the first step in protein N-glycosylation. N-glycosylation occurs cotranslationally and the complex associates with the Sec61 complex at the channel-forming translocon complex that mediates protein translocation across the endoplasmic reticulum (ER). All subunits are required for a maximal enzyme activity. In Arabidopsis thaliana (Mouse-ear cress), this protein is Dolichyl-diphosphooligosaccharide--protein glycosyltransferase subunit DAD1 (DAD1).